Here is a 505-residue protein sequence, read N- to C-terminus: 2,3-bisphosphoglycerate-independent phosphoglycerate mutase (505 aa).

Mn(2+)-binding residues include Asp-15 and Ser-65. Ser-65 functions as the Phosphoserine intermediate in the catalytic mechanism. Substrate contacts are provided by residues His-126, 156–157 (RD), Arg-187, Arg-193, 260–263 (RPDR), and Lys-333. Residues Asp-398, His-402, Asp-439, His-440, and His-457 each contribute to the Mn(2+) site.

This sequence belongs to the BPG-independent phosphoglycerate mutase family. In terms of assembly, monomer. Mn(2+) serves as cofactor.

It catalyses the reaction (2R)-2-phosphoglycerate = (2R)-3-phosphoglycerate. The protein operates within carbohydrate degradation; glycolysis; pyruvate from D-glyceraldehyde 3-phosphate: step 3/5. Its function is as follows. Catalyzes the interconversion of 2-phosphoglycerate and 3-phosphoglycerate. In Mycoplasmopsis pulmonis (strain UAB CTIP) (Mycoplasma pulmonis), this protein is 2,3-bisphosphoglycerate-independent phosphoglycerate mutase.